The sequence spans 383 residues: LIM/homeobox protein Lhx3 (383 aa).

LIM zinc-binding domains lie at 14–73 (PLCA…RFGT) and 73–136 (TKCA…AKQR). Thr48 carries the post-translational modification Phosphothreonine. The residue at position 56 (Ser56) is a Phosphoserine. A DNA-binding region (homeobox) is located at residues 142–201 (AKRPRTTITAKQLETLKSAYNTSPKPARHVREQLSSETGLDMRVVQVWFQNRRAKEKRLK). A disordered region spans residues 197–383 (EKRLKKDAGR…WLDEVDHAQF (187 aa)). Tyr212 carries the post-translational modification Phosphotyrosine. Ser223 is modified (phosphoserine). Over residues 307-334 (PAALQSLPGPQPLLSSLVYPEAGLGLVP) the composition is skewed to low complexity. Residues 335–344 (AGPPGGPPPM) show a composition bias toward pro residues.

Interacts with POU1F1. At neuronal promoters, interacts with LDB1, in motor neurons LDB1 is displaced by ISL1 and a ternary complex is formed in which ISL1 contacts both LHX3 and LDB1; allosteric structural changes in the DNA binding domain of LHX3, induced by the ISL1-LHX3 interaction, may explain differences in sequence specificity of the different complexes. Interacts with LDB2. May interact with CITED2/MRG1.

Its subcellular location is the nucleus. In terms of biological role, transcription factor. Recognizes and binds to the consensus sequence motif 5'-AATTAATTA-3' in the regulatory elements of target genes, such as glycoprotein hormones alpha chain CGA and visual system homeobox CHX10, positively modulating transcription; transcription can be co-activated by LDB2. Synergistically enhances transcription from the prolactin promoter in cooperation with POU1F1/Pit-1. Required for the establishment of the specialized cells of the pituitary gland and the nervous system. Involved in the development of interneurons and motor neurons in cooperation with LDB1 and ISL1. This chain is LIM/homeobox protein Lhx3 (LHX3), found in Sus scrofa (Pig).